Here is a 289-residue protein sequence, read N- to C-terminus: Phosphatidylinositol:ceramide inositolphosphotransferase 3 (289 aa).

Transmembrane regions (helical) follow at residues 33–53 (LVLAGLVFQYIHGLAAHGVHY), 77–97 (AFFSETVFVTIFGSFILWTFH), 115–135 (VFVYLAASQSLRIITFFATQL), 169–189 (VIYGCGDLIFSSHTIFTLVFV), and 199–219 (RWIKHLAWLMAVIQSILIIAS). Residue histidine 181 is part of the active site. Active-site residues include histidine 222 and aspartate 226. The helical transmembrane segment at 223-243 (YTVDIVVAWYTVNLVMFYVDS) threads the bilayer. The interval 249–289 (AERSSGPSPTPLLPLSTKDSKNKSKEDHQRLLNENNVADDH) is disordered. The span at 266-279 (KDSKNKSKEDHQRL) shows a compositional bias: basic and acidic residues. Over residues 280 to 289 (LNENNVADDH) the composition is skewed to polar residues.

Belongs to the sphingomyelin synthase family. In terms of tissue distribution, mostly expressed in stems and flowers, and, to a lower extent, in leaves, roots and siliques.

The protein localises to the membrane. Functionally, catalyzes the transfer of the phosphorylinositol group from phosphatidylinositol (PI) to phytoceramide, an essential step in sphingolipid biosynthesis. The polypeptide is Phosphatidylinositol:ceramide inositolphosphotransferase 3 (IPCS3) (Arabidopsis thaliana (Mouse-ear cress)).